We begin with the raw amino-acid sequence, 475 residues long: Fez family zinc finger protein 1 (475 aa).

The Engrailed homology 1 repressor signature appears at 28–43 (PLAFSIERIMARTPEP). C2H2-type zinc fingers lie at residues 260–282 (FTCE…MPVH), 288–310 (FVCK…KIIH), 316–338 (HKCN…TRIH), 344–366 (FVCE…KLTH), 372–394 (FKCN…MHTH), and 400–423 (FTCP…RKLH). A disordered region spans residues 425-475 (SSLGLTRTPTGEPSSDPPPQLQQPPPAPLPPLQPTLPPPGPLPSGLHQGHQ). Residues 427-437 (LGLTRTPTGEP) show a composition bias toward polar residues. A compositionally biased stretch (pro residues) spans 439–466 (SDPPPQLQQPPPAPLPPLQPTLPPPGPL).

The protein belongs to the krueppel C2H2-type zinc-finger protein family.

It is found in the nucleus. Functionally, transcription repressor. Involved in the axonal projection and proper termination of olfactory sensory neurons (OSN). Plays a role in rostro-caudal patterning of the diencephalon and in prethalamic formation. Expression is required in OSN to cell-autonomously regulate OSN axon projections. Regulates non-cell-autonomously the layer formation of the olfactory bulb development and the interneurons. May be required for correct rostral migration of the interneuron progenitors. The polypeptide is Fez family zinc finger protein 1 (Fezf1) (Mus musculus (Mouse)).